A 331-amino-acid chain; its full sequence is Cysteine and histidine-rich domain-containing protein 1 (331 aa).

Residues C5, C10, C24, H27, C42, C43, C59, H64, C157, C162, C176, H179, C194, C195, C211, and H216 each coordinate Zn(2+). CHORD domains lie at 5–64 and 157–216; these read CYNR…KGLH and CKNA…TGTH. In terms of domain architecture, CS spans 227 to 316; it reads VVPCRHDWHQ…AEPLLWASLE (90 aa).

Regulates centrosome duplication. The sequence is that of Cysteine and histidine-rich domain-containing protein 1 (CHORDC1) from Gallus gallus (Chicken).